The primary structure comprises 115 residues: MLSRKATAVLLAVHAAAMLASQTEAFVPIFTYGEVRRMQEKERYKGQKKSLSVQQRSEEVGPVDPTEPWEEKQEVIKLTAPVEIGMRMNSRQLEKYQATLEGLLREVLPPSRNAQ.

A signal peptide spans 1-25; it reads MLSRKATAVLLAVHAAAMLASQTEA. The tract at residues 43–72 is disordered; that stretch reads RYKGQKKSLSVQQRSEEVGPVDPTEPWEEK.

It belongs to the motilin family.

The protein localises to the secreted. Functionally, plays an important role in the regulation of interdigestive gastrointestinal motility and indirectly causes rhythmic contraction of duodenal and colonic smooth muscle. The chain is Promotilin (MLN) from Bos taurus (Bovine).